Reading from the N-terminus, the 70-residue chain is MARPEISEVTKLTDDDLKNKIDEIRKELFDLRFKRATRQLSETHRFKEARIQLAQLLTVQGDRNRSKTSS.

The protein belongs to the universal ribosomal protein uL29 family.

The polypeptide is Large ribosomal subunit protein uL29 (Prochlorococcus marinus (strain MIT 9211)).